A 390-amino-acid polypeptide reads, in one-letter code: Transforming growth factor beta-1 proprotein (390 aa).

A signal peptide spans 1-29 (MPPSGLRLLPLLLPLLWLLMLTPGRPVAG). The tract at residues 30 to 74 (LSTCKTIDMELVKRKRIEAIRGQILSKLRLASPPSQGDVPPGPLP) is straightjacket domain. Positions 75–271 (EAILALYNST…ATPLERAQHL (197 aa)) are arm domain. Asn82, Asn136, and Asn176 each carry an N-linked (GlcNAc...) asparagine glycan. A bowtie tail region spans residues 226-252 (DSKDNTLQVDINGFSSGRRGDLATIHG). The Cell attachment site signature appears at 244–246 (RGD). Disulfide bonds link Cys285/Cys294, Cys293/Cys356, Cys322/Cys387, and Cys326/Cys389.

Belongs to the TGF-beta family. As to quaternary structure, homodimer; disulfide-linked. Interacts with the serine proteases, HTRA1 and HTRA3: the interaction with either inhibits TGFB1-mediated signaling and the HTRA protease activity is required for this inhibition. May interact with THSD4; this interaction may lead to sequestration by FBN1 microfibril assembly and attenuation of TGFB signaling. Interacts with CD109, DPT and ASPN. Interacts with EFEMP2. Interacts with TSKU; the interaction contributes to regulation of the hair cycle. Interacts with TGFBR3. Homodimer; disulfide-linked. Interacts with transforming growth factor beta-1 (TGF-beta-1) chain; interaction is non-covalent and maintains TGF-beta-1 in a latent state; each latency-associated peptide (LAP) monomer interacts with TGF-beta-1 in the other monomer. Interacts with LTBP1; leading to regulation of TGF-beta-1 activation. Interacts with LRRC32/GARP; leading to regulation of TGF-beta-1 activation on the surface of activated regulatory T-cells (Tregs). Interacts with LRRC33/NRROS; leading to regulation of TGF-beta-1 activation in macrophages and microglia. Interacts (via cell attachment site) with integrins ITGAV and ITGB6 (ITGAV:ITGB6), leading to release of the active TGF-beta-1. Interacts with NREP; the interaction results in a decrease in TGFB1 autoinduction. Interacts with HSP90AB1; inhibits latent TGFB1 activation. In terms of assembly, homodimer; disulfide-linked. Interacts with TGF-beta receptors (TGFBR1 and TGFBR2), leading to signal transduction. Interacts with EFEMP2. In terms of processing, transforming growth factor beta-1 proprotein: The precursor proprotein is cleaved in the Golgi apparatus by FURIN to form Transforming growth factor beta-1 (TGF-beta-1) and Latency-associated peptide (LAP) chains, which remain non-covalently linked, rendering TGF-beta-1 inactive. Post-translationally, N-glycosylated. Deglycosylation leads to activation of Transforming growth factor beta-1 (TGF-beta-1); mechanisms triggering deglycosylation-driven activation of TGF-beta-1 are however unclear.

It is found in the secreted. It localises to the extracellular space. The protein localises to the extracellular matrix. Transforming growth factor beta-1 proprotein: Precursor of the Latency-associated peptide (LAP) and Transforming growth factor beta-1 (TGF-beta-1) chains, which constitute the regulatory and active subunit of TGF-beta-1, respectively. Its function is as follows. Required to maintain the Transforming growth factor beta-1 (TGF-beta-1) chain in a latent state during storage in extracellular matrix. Associates non-covalently with TGF-beta-1 and regulates its activation via interaction with 'milieu molecules', such as LTBP1, LRRC32/GARP and LRRC33/NRROS, that control activation of TGF-beta-1. Interaction with LRRC33/NRROS regulates activation of TGF-beta-1 in macrophages and microglia. Interaction with LRRC32/GARP controls activation of TGF-beta-1 on the surface of activated regulatory T-cells (Tregs). Interaction with integrins (ITGAV:ITGB6 or ITGAV:ITGB8) results in distortion of the Latency-associated peptide chain and subsequent release of the active TGF-beta-1. Functionally, multifunctional protein that regulates the growth and differentiation of various cell types and is involved in various processes, such as normal development, immune function, microglia function and responses to neurodegeneration. Activation into mature form follows different steps: following cleavage of the proprotein in the Golgi apparatus, Latency-associated peptide (LAP) and Transforming growth factor beta-1 (TGF-beta-1) chains remain non-covalently linked rendering TGF-beta-1 inactive during storage in extracellular matrix. At the same time, LAP chain interacts with 'milieu molecules', such as LTBP1, LRRC32/GARP and LRRC33/NRROS that control activation of TGF-beta-1 and maintain it in a latent state during storage in extracellular milieus. TGF-beta-1 is released from LAP by integrins (ITGAV:ITGB6 or ITGAV:ITGB8): integrin-binding to LAP stabilizes an alternative conformation of the LAP bowtie tail and results in distortion of the LAP chain and subsequent release of the active TGF-beta-1. Once activated following release of LAP, TGF-beta-1 acts by binding to TGF-beta receptors (TGFBR1 and TGFBR2), which transduce signal. While expressed by many cells types, TGF-beta-1 only has a very localized range of action within cell environment thanks to fine regulation of its activation by Latency-associated peptide chain (LAP) and 'milieu molecules'. Plays an important role in bone remodeling: acts as a potent stimulator of osteoblastic bone formation, causing chemotaxis, proliferation and differentiation in committed osteoblasts. Can promote either T-helper 17 cells (Th17) or regulatory T-cells (Treg) lineage differentiation in a concentration-dependent manner. At high concentrations, leads to FOXP3-mediated suppression of RORC and down-regulation of IL-17 expression, favoring Treg cell development. At low concentrations in concert with IL-6 and IL-21, leads to expression of the IL-17 and IL-23 receptors, favoring differentiation to Th17 cells. Stimulates sustained production of collagen through the activation of CREB3L1 by regulated intramembrane proteolysis (RIP). Mediates SMAD2/3 activation by inducing its phosphorylation and subsequent translocation to the nucleus. Positively regulates odontoblastic differentiation in dental papilla cells, via promotion of IPO7-mediated translocation of phosphorylated SMAD2 to the nucleus and subsequent transcription of target genes. Can induce epithelial-to-mesenchymal transition (EMT) and cell migration in various cell types. The chain is Transforming growth factor beta-1 proprotein (TGFB1) from Bos taurus (Bovine).